Reading from the N-terminus, the 138-residue chain is Transcription antitermination protein NusB (138 aa).

Belongs to the NusB family.

Functionally, involved in transcription antitermination. Required for transcription of ribosomal RNA (rRNA) genes. Binds specifically to the boxA antiterminator sequence of the ribosomal RNA (rrn) operons. In Leptospira interrogans serogroup Icterohaemorrhagiae serovar copenhageni (strain Fiocruz L1-130), this protein is Transcription antitermination protein NusB.